A 164-amino-acid chain; its full sequence is Crossover junction endodeoxyribonuclease RuvC (164 aa).

Catalysis depends on residues Asp7, Glu67, and Asp140. Asp7, Glu67, and Asp140 together coordinate Mg(2+).

The protein belongs to the RuvC family. As to quaternary structure, homodimer which binds Holliday junction (HJ) DNA. The HJ becomes 2-fold symmetrical on binding to RuvC with unstacked arms; it has a different conformation from HJ DNA in complex with RuvA. In the full resolvosome a probable DNA-RuvA(4)-RuvB(12)-RuvC(2) complex forms which resolves the HJ. Mg(2+) is required as a cofactor.

Its subcellular location is the cytoplasm. It carries out the reaction Endonucleolytic cleavage at a junction such as a reciprocal single-stranded crossover between two homologous DNA duplexes (Holliday junction).. The RuvA-RuvB-RuvC complex processes Holliday junction (HJ) DNA during genetic recombination and DNA repair. Endonuclease that resolves HJ intermediates. Cleaves cruciform DNA by making single-stranded nicks across the HJ at symmetrical positions within the homologous arms, yielding a 5'-phosphate and a 3'-hydroxyl group; requires a central core of homology in the junction. The consensus cleavage sequence is 5'-(A/T)TT(C/G)-3'. Cleavage occurs on the 3'-side of the TT dinucleotide at the point of strand exchange. HJ branch migration catalyzed by RuvA-RuvB allows RuvC to scan DNA until it finds its consensus sequence, where it cleaves and resolves the cruciform DNA. This Chloroflexus aggregans (strain MD-66 / DSM 9485) protein is Crossover junction endodeoxyribonuclease RuvC.